The chain runs to 513 residues: Glutamyl-tRNA(Gln) amidotransferase subunit A (513 aa).

Residues lysine 85 and serine 160 each act as charge relay system in the active site. The active-site Acyl-ester intermediate is serine 184.

It belongs to the amidase family. GatA subfamily. In terms of assembly, heterotrimer of A, B and C subunits.

The catalysed reaction is L-glutamyl-tRNA(Gln) + L-glutamine + ATP + H2O = L-glutaminyl-tRNA(Gln) + L-glutamate + ADP + phosphate + H(+). In terms of biological role, allows the formation of correctly charged Gln-tRNA(Gln) through the transamidation of misacylated Glu-tRNA(Gln) in organisms which lack glutaminyl-tRNA synthetase. The reaction takes place in the presence of glutamine and ATP through an activated gamma-phospho-Glu-tRNA(Gln). The polypeptide is Glutamyl-tRNA(Gln) amidotransferase subunit A (Bifidobacterium longum subsp. infantis (strain ATCC 15697 / DSM 20088 / JCM 1222 / NCTC 11817 / S12)).